Consider the following 177-residue polypeptide: Interleukin-1 receptor antagonist protein (177 aa).

Positions 1-25 are cleaved as a signal peptide; sequence MEVSRYLCSYLISFLLFLFHSETAC. The cysteines at positions 91 and 141 are disulfide-linked. N109 carries an N-linked (GlcNAc...) asparagine glycan.

This sequence belongs to the IL-1 family.

It is found in the secreted. Anti-inflammatory antagonist of interleukin-1 family of proinflammatory cytokines such as interleukin-1beta/IL1B and interleukin-1alpha/IL1A. Protects from immune dysregulation and uncontrolled systemic inflammation triggered by IL1 for a range of innate stimulatory agents such as pathogens. The chain is Interleukin-1 receptor antagonist protein (IL1RN) from Sus scrofa (Pig).